A 239-amino-acid chain; its full sequence is Probable transcriptional regulatory protein BCQ_0605 (239 aa).

The protein belongs to the TACO1 family. YeeN subfamily.

Its subcellular location is the cytoplasm. In Bacillus cereus (strain Q1), this protein is Probable transcriptional regulatory protein BCQ_0605.